The primary structure comprises 147 residues: Cyanate hydratase (147 aa).

Active-site residues include arginine 88, glutamate 91, and serine 114.

It belongs to the cyanase family.

The enzyme catalyses cyanate + hydrogencarbonate + 3 H(+) = NH4(+) + 2 CO2. Its function is as follows. Catalyzes the reaction of cyanate with bicarbonate to produce ammonia and carbon dioxide. The sequence is that of Cyanate hydratase from Albidiferax ferrireducens (strain ATCC BAA-621 / DSM 15236 / T118) (Rhodoferax ferrireducens).